The primary structure comprises 452 residues: Phosphoglucosamine mutase (452 aa).

Residue serine 103 is the Phosphoserine intermediate of the active site. Mg(2+)-binding residues include serine 103, aspartate 243, aspartate 245, and aspartate 247. Serine 103 is modified (phosphoserine).

It belongs to the phosphohexose mutase family. Mg(2+) serves as cofactor. In terms of processing, activated by phosphorylation.

The enzyme catalyses alpha-D-glucosamine 1-phosphate = D-glucosamine 6-phosphate. Its function is as follows. Catalyzes the conversion of glucosamine-6-phosphate to glucosamine-1-phosphate. The polypeptide is Phosphoglucosamine mutase (Exiguobacterium sp. (strain ATCC BAA-1283 / AT1b)).